The following is a 449-amino-acid chain: Glucose-6-phosphate isomerase (449 aa).

The Proton donor role is filled by Glu-290. Catalysis depends on residues His-311 and Lys-425.

This sequence belongs to the GPI family.

It localises to the cytoplasm. The enzyme catalyses alpha-D-glucose 6-phosphate = beta-D-fructose 6-phosphate. Its pathway is carbohydrate biosynthesis; gluconeogenesis. It participates in carbohydrate degradation; glycolysis; D-glyceraldehyde 3-phosphate and glycerone phosphate from D-glucose: step 2/4. In terms of biological role, catalyzes the reversible isomerization of glucose-6-phosphate to fructose-6-phosphate. This chain is Glucose-6-phosphate isomerase, found in Clostridium tetani (strain Massachusetts / E88).